The primary structure comprises 223 residues: Pyridoxine/pyridoxamine 5'-phosphate oxidase (223 aa).

Residues 13–16 and Lys73 contribute to the substrate site; that span reads RKNY. FMN contacts are provided by residues 68 to 73, 83 to 84, Lys90, and Gln112; these read RIVLLK and YT. Residues Tyr130, Arg134, and Ser138 each contribute to the substrate site. FMN is bound by residues 147 to 148 and Trp193; that span reads QS. Residue 199 to 201 coordinates substrate; that stretch reads RLH. Arg203 contributes to the FMN binding site.

Belongs to the pyridoxamine 5'-phosphate oxidase family. Homodimer. The cofactor is FMN.

The catalysed reaction is pyridoxamine 5'-phosphate + O2 + H2O = pyridoxal 5'-phosphate + H2O2 + NH4(+). The enzyme catalyses pyridoxine 5'-phosphate + O2 = pyridoxal 5'-phosphate + H2O2. It participates in cofactor metabolism; pyridoxal 5'-phosphate salvage; pyridoxal 5'-phosphate from pyridoxamine 5'-phosphate: step 1/1. The protein operates within cofactor metabolism; pyridoxal 5'-phosphate salvage; pyridoxal 5'-phosphate from pyridoxine 5'-phosphate: step 1/1. Functionally, catalyzes the oxidation of either pyridoxine 5'-phosphate (PNP) or pyridoxamine 5'-phosphate (PMP) into pyridoxal 5'-phosphate (PLP). This is Pyridoxine/pyridoxamine 5'-phosphate oxidase from Rhodopirellula baltica (strain DSM 10527 / NCIMB 13988 / SH1).